Consider the following 374-residue polypeptide: N-acetyldiaminopimelate deacetylase (374 aa).

The active site involves Asp-69. Glu-128 (proton acceptor) is an active-site residue.

This sequence belongs to the peptidase M20A family. N-acetyldiaminopimelate deacetylase subfamily.

The enzyme catalyses N-acetyl-(2S,6S)-2,6-diaminopimelate + H2O = (2S,6S)-2,6-diaminopimelate + acetate. It participates in amino-acid biosynthesis; L-lysine biosynthesis via DAP pathway; LL-2,6-diaminopimelate from (S)-tetrahydrodipicolinate (acetylase route): step 3/3. Catalyzes the conversion of N-acetyl-diaminopimelate to diaminopimelate and acetate. The sequence is that of N-acetyldiaminopimelate deacetylase from Bacillus licheniformis (strain ATCC 14580 / DSM 13 / JCM 2505 / CCUG 7422 / NBRC 12200 / NCIMB 9375 / NCTC 10341 / NRRL NRS-1264 / Gibson 46).